We begin with the raw amino-acid sequence, 322 residues long: HPr kinase/phosphorylase (322 aa).

Catalysis depends on residues His-153 and Lys-174. Position 168-175 (168-175) interacts with ATP; that stretch reads GRSGLGKS. Ser-175 is a binding site for Mg(2+). The active-site Proton acceptor; for phosphorylation activity. Proton donor; for dephosphorylation activity is the Asp-192. Residues 217 to 226 are important for the catalytic mechanism of both phosphorylation and dephosphorylation; it reads MEIRGLGVVD. Glu-218 is a Mg(2+) binding site. Residue Arg-259 is part of the active site. Residues 280 to 285 form an important for the catalytic mechanism of dephosphorylation region; the sequence is PIFPGK.

Belongs to the HPrK/P family. Homohexamer. Requires Mg(2+) as cofactor.

The catalysed reaction is [HPr protein]-L-serine + ATP = [HPr protein]-O-phospho-L-serine + ADP + H(+). The enzyme catalyses [HPr protein]-O-phospho-L-serine + phosphate + H(+) = [HPr protein]-L-serine + diphosphate. Catalyzes the ATP- as well as the pyrophosphate-dependent phosphorylation of a specific serine residue in HPr, a phosphocarrier protein of the phosphoenolpyruvate-dependent sugar phosphotransferase system (PTS). HprK/P also catalyzes the pyrophosphate-producing, inorganic phosphate-dependent dephosphorylation (phosphorolysis) of seryl-phosphorylated HPr (P-Ser-HPr). This Chlorobium phaeobacteroides (strain DSM 266 / SMG 266 / 2430) protein is HPr kinase/phosphorylase.